The following is a 154-amino-acid chain: uncharacterized protein (154 aa).

Coiled-coil stretches lie at residues 8 to 48 (DEEV…AIEA) and 89 to 138 (VQEL…RGLV).

This is an uncharacterized protein from Treponema pallidum (strain Nichols).